We begin with the raw amino-acid sequence, 467 residues long: Cytochrome c-552 (467 aa).

Residues Met1–Ala27 form the signal peptide. A heme c-binding site is contributed by His87. Residues Cys115, Cys118, and Lys119 each contribute to the heme site. The heme c site is built by Cys153, Cys156, His157, Cys195, Cys198, and His199. 4 residues coordinate Ca(2+): Glu201, Tyr202, Lys250, and Gln252. Tyr202 provides a ligand contact to substrate. Substrate is bound at residue His253. The heme c site is built by His264, Cys271, Cys274, His275, His290, Cys303, Cys306, His307, and His382.

It belongs to the cytochrome c-552 family. Ca(2+) is required as a cofactor. The cofactor is heme c.

Its subcellular location is the periplasm. The enzyme catalyses 6 Fe(III)-[cytochrome c] + NH4(+) + 2 H2O = 6 Fe(II)-[cytochrome c] + nitrite + 8 H(+). Its pathway is nitrogen metabolism; nitrate reduction (assimilation). In terms of biological role, catalyzes the reduction of nitrite to ammonia, consuming six electrons in the process. The chain is Cytochrome c-552 from Shewanella amazonensis (strain ATCC BAA-1098 / SB2B).